A 313-amino-acid polypeptide reads, in one-letter code: D-alanine--D-alanine ligase (313 aa).

In terms of domain architecture, ATP-grasp spans 108 to 308 (KLVWQQLGIP…YQELVVGVLA (201 aa)). 138-193 (VAKLGLPLFVKPASEGSSVAVIKVKSADALPAALIEAVKYDKIVVVEKSVEGGGEY) is an ATP binding site. Mg(2+) contacts are provided by Asp-262, Glu-275, and Asn-277.

Belongs to the D-alanine--D-alanine ligase family. It depends on Mg(2+) as a cofactor. The cofactor is Mn(2+).

The protein localises to the cytoplasm. The enzyme catalyses 2 D-alanine + ATP = D-alanyl-D-alanine + ADP + phosphate + H(+). It functions in the pathway cell wall biogenesis; peptidoglycan biosynthesis. Cell wall formation. The chain is D-alanine--D-alanine ligase from Paraburkholderia phytofirmans (strain DSM 17436 / LMG 22146 / PsJN) (Burkholderia phytofirmans).